Here is a 967-residue protein sequence, read N- to C-terminus: Leucine-rich repeat-containing G-protein coupled receptor 6 (967 aa).

Residues 1-24 form the signal peptide; that stretch reads MPSPPGLRALWLCAALCASRRAGG. The Extracellular portion of the chain corresponds to 25-567; the sequence is APQPGPGPTA…LFESWGIRLA (543 aa). The LRRNT domain occupies 26-66; that stretch reads PQPGPGPTACPAPCHCQEDGIMLSADCSELGLSAVPGDLDP. Asparagine 77 is a glycosylation site (N-linked (GlcNAc...) asparagine). LRR repeat units follow at residues 91–112, 115–136, 139–160, 163–186, 187–208, 211–232, 235–256, 258–279, 282–303, 306–328, 329–350, 353–374, 375–396, 399–420, and 423–443; these read FLEE…AFSG, SLKI…ALWE, SLQS…SFEG, SLRH…NNLP, ALQA…AFQN, SLVV…SFEG, NLET…IRTL, RLQE…AFMG, LLQT…AFQY, KLHT…KGTT, SLEI…MCQQ, RLRV…HRCQ, KLEE…TFSQ, SLQA…AFST, and SLVK…AGLG. Residue asparagine 208 is glycosylated (N-linked (GlcNAc...) asparagine). Residues 568–588 traverse the membrane as a helical segment; that stretch reads VWAIVLLSVLCNGLVLLTVFA. At 589-598 the chain is on the cytoplasmic side; the sequence is GGPVPLPPVK. Residues 599-619 form a helical membrane-spanning segment; sequence FVVGAIAGANTLTGISCGLLA. At 620–644 the chain is on the extracellular side; it reads SVDALTFGQFSEYGARWETGLGCRA. An intrachain disulfide couples cysteine 642 to cysteine 717. Residues 645–665 form a helical membrane-spanning segment; sequence TGFLAVLGSEASVLLLTLAAV. Over 666-687 the chain is Cytoplasmic; it reads QCSVSVSCVRAYGKSPSLGSVR. A helical transmembrane segment spans residues 688-708; that stretch reads AGVLGCLALAGLAAALPLASV. Topologically, residues 709–727 are extracellular; it reads GEYGASPLCLPYAPPEGQP. Residues 728 to 748 form a helical membrane-spanning segment; sequence AALGFTVALVMMNSFCFLVVA. Topologically, residues 749 to 774 are cytoplasmic; sequence GAYIKLYCDLPRGDFEAVWDCAMVRH. The chain crosses the membrane as a helical span at residues 775–795; sequence VAWLIFADGLLYCPVAFLSFA. Topologically, residues 796–809 are extracellular; the sequence is SMLGLFPVTPEAVK. A helical transmembrane segment spans residues 810–830; that stretch reads SVLLVVLPLPACLNPLLYLLF. At 831–967 the chain is on the cytoplasmic side; the sequence is NPHFRDDLRR…PSGLAFASHV (137 aa).

This sequence belongs to the G-protein coupled receptor 1 family.

Its subcellular location is the cell membrane. Functionally, receptor for R-spondins that potentiates the canonical Wnt signaling pathway and acts as a marker of multipotent stem cells in the epidermis. Upon binding to R-spondins (RSPO1, RSPO2, RSPO3 or RSPO4), associates with phosphorylated LRP6 and frizzled receptors that are activated by extracellular Wnt receptors, triggering the canonical Wnt signaling pathway to increase expression of target genes. In contrast to classical G-protein coupled receptors, does not activate heterotrimeric G-proteins to transduce the signal. May act as a tumor suppressor. This chain is Leucine-rich repeat-containing G-protein coupled receptor 6 (LGR6), found in Homo sapiens (Human).